Reading from the N-terminus, the 266-residue chain is E3 ubiquitin-protein ligase RNF170 (266 aa).

Residues methionine 1–asparagine 26 are Lumenal-facing. A helical transmembrane segment spans residues alanine 27–cysteine 47. At arginine 48–arginine 209 the chain is on the cytoplasmic side. The RING-type zinc finger occupies cysteine 88–arginine 131. Residues isoleucine 210–glutamate 230 traverse the membrane as a helical segment. Residue glycine 231 is a topological domain, lumenal. A helical transmembrane segment spans residues valine 232–isoleucine 252. Residues serine 253–glycine 266 are Cytoplasmic-facing.

As to expression, highly expressed in the developing brain, and less within intersomitic structures of the trunk.

Its subcellular location is the endoplasmic reticulum membrane. The enzyme catalyses S-ubiquitinyl-[E2 ubiquitin-conjugating enzyme]-L-cysteine + [acceptor protein]-L-lysine = [E2 ubiquitin-conjugating enzyme]-L-cysteine + N(6)-ubiquitinyl-[acceptor protein]-L-lysine.. The protein operates within protein modification; protein ubiquitination. In terms of biological role, E3 ubiquitin-protein ligase that plays an essential role in stimulus-induced inositol 1,4,5-trisphosphate receptor (ITPR) ubiquitination and degradation via the endoplasmic reticulum-associated degradation (ERAD) pathway. Also involved in ITPR turnover in resting cells. This is E3 ubiquitin-protein ligase RNF170 (rnf170) from Danio rerio (Zebrafish).